A 510-amino-acid polypeptide reads, in one-letter code: Zinc metalloproteinase (510 aa).

Positions 1–24 are cleaved as a signal peptide; that stretch reads MKSKLICIIMVIAFQAHFTMTVKA. A propeptide spanning residues 25–200 is cleaved from the precursor; it reads DSVGEEKLQN…ILKKQNMLSE (176 aa). Zn(2+) is bound at residue His349. Glu350 is a catalytic residue. Residues His353 and Glu373 each coordinate Zn(2+). His437 functions as the Proton donor in the catalytic mechanism.

Belongs to the peptidase M4 family. The cofactor is Zn(2+).

The protein localises to the secreted. Functionally, probably linked to the pathogenesis of listerial infection. The polypeptide is Zinc metalloproteinase (mpl) (Listeria monocytogenes serovar 1/2a (strain ATCC BAA-679 / EGD-e)).